We begin with the raw amino-acid sequence, 894 residues long: Leucine--tRNA ligase, mitochondrial (894 aa).

The transit peptide at 1–9 (MLSRPSSRF) directs the protein to the mitochondrion. The 'HIGH' region motif lies at 56-66 (PYPSGALHIGH). Positions 646–650 (KMSKS) match the 'KMSKS' region motif. K649 is a binding site for ATP.

The protein belongs to the class-I aminoacyl-tRNA synthetase family.

The protein resides in the mitochondrion matrix. The enzyme catalyses tRNA(Leu) + L-leucine + ATP = L-leucyl-tRNA(Leu) + AMP + diphosphate. Catalyzes the attachment of leucine to tRNA(Leu) in the mitochondrion. This Saccharomyces cerevisiae (strain ATCC 204508 / S288c) (Baker's yeast) protein is Leucine--tRNA ligase, mitochondrial (NAM2).